A 349-amino-acid polypeptide reads, in one-letter code: Small ribosomal subunit biogenesis GTPase RsgA (349 aa).

A compositionally biased stretch (basic residues) spans 1–11 (MSKKKLSKGQQ). Residues 1–29 (MSKKKLSKGQQRRVSANHQRRLKKTESKV) form a disordered region. The 171-residue stretch at 102–272 (HSVLTRPDYY…VIDSPGVREF (171 aa)) folds into the CP-type G domain. GTP-binding positions include 158 to 161 (NKID) and 212 to 220 (GQSGVGKSS). Positions 296, 301, 303, and 309 each coordinate Zn(2+).

The protein belongs to the TRAFAC class YlqF/YawG GTPase family. RsgA subfamily. In terms of assembly, monomer. Associates with 30S ribosomal subunit, binds 16S rRNA. Zn(2+) serves as cofactor.

The protein localises to the cytoplasm. Its function is as follows. One of several proteins that assist in the late maturation steps of the functional core of the 30S ribosomal subunit. Helps release RbfA from mature subunits. May play a role in the assembly of ribosomal proteins into the subunit. Circularly permuted GTPase that catalyzes slow GTP hydrolysis, GTPase activity is stimulated by the 30S ribosomal subunit. This is Small ribosomal subunit biogenesis GTPase RsgA from Pectobacterium atrosepticum (strain SCRI 1043 / ATCC BAA-672) (Erwinia carotovora subsp. atroseptica).